We begin with the raw amino-acid sequence, 117 residues long: Nascent polypeptide-associated complex protein (117 aa).

In terms of domain architecture, NAC-A/B spans 9-77 (PKQLKQMQRA…ARERSLEAEM (69 aa)).

Belongs to the NAC-alpha family. In terms of assembly, homodimer. Interacts with the ribosome. Binds ribosomal RNA.

Functionally, contacts the emerging nascent chain on the ribosome. The protein is Nascent polypeptide-associated complex protein of Methanothermobacter thermautotrophicus (strain ATCC 29096 / DSM 1053 / JCM 10044 / NBRC 100330 / Delta H) (Methanobacterium thermoautotrophicum).